Consider the following 554-residue polypeptide: Glucose-6-phosphate isomerase (554 aa).

The active-site Proton donor is E359. Residues H390 and K518 contribute to the active site.

The protein belongs to the GPI family.

Its subcellular location is the cytoplasm. It carries out the reaction alpha-D-glucose 6-phosphate = beta-D-fructose 6-phosphate. The protein operates within carbohydrate biosynthesis; gluconeogenesis. It functions in the pathway carbohydrate degradation; glycolysis; D-glyceraldehyde 3-phosphate and glycerone phosphate from D-glucose: step 2/4. Catalyzes the reversible isomerization of glucose-6-phosphate to fructose-6-phosphate. In Pseudomonas putida (strain ATCC 700007 / DSM 6899 / JCM 31910 / BCRC 17059 / LMG 24140 / F1), this protein is Glucose-6-phosphate isomerase.